A 215-amino-acid polypeptide reads, in one-letter code: MSVQVKICGLSTPETIEASVSAGADYLGFVFFSRSPRHLSYELAARLSGYVPASVPKVALTVDADDAMLDAVVEALRPDILQLHGDETPQRLVEIKARYGLTLMKAICVAQPEDPLTAAIYRDSADLLLFDAKPPKSMAGALPGGNGLVFDWSLIAGHRPETPWMLSGGLNAENVAEAVRITGAEAVDVSSGIEEGPGRKTPELIEAFIRAAKRA.

Belongs to the TrpF family.

It carries out the reaction N-(5-phospho-beta-D-ribosyl)anthranilate = 1-(2-carboxyphenylamino)-1-deoxy-D-ribulose 5-phosphate. It participates in amino-acid biosynthesis; L-tryptophan biosynthesis; L-tryptophan from chorismate: step 3/5. This chain is N-(5'-phosphoribosyl)anthranilate isomerase, found in Parvibaculum lavamentivorans (strain DS-1 / DSM 13023 / NCIMB 13966).